A 396-amino-acid polypeptide reads, in one-letter code: Acetate kinase (396 aa).

A Mg(2+)-binding site is contributed by asparagine 8. Residue lysine 15 participates in ATP binding. Arginine 89 lines the substrate pocket. Residue aspartate 146 is the Proton donor/acceptor of the active site. ATP-binding positions include 206-210, 283-285, and 331-335; these read HIGNG, DMR, and GVGEN. Glutamate 383 is a binding site for Mg(2+).

It belongs to the acetokinase family. In terms of assembly, homodimer. Mg(2+) is required as a cofactor. The cofactor is Mn(2+).

The protein localises to the cytoplasm. It catalyses the reaction acetate + ATP = acetyl phosphate + ADP. It participates in metabolic intermediate biosynthesis; acetyl-CoA biosynthesis; acetyl-CoA from acetate: step 1/2. Functionally, catalyzes the formation of acetyl phosphate from acetate and ATP. Can also catalyze the reverse reaction. The protein is Acetate kinase of Streptococcus pneumoniae (strain Hungary19A-6).